The chain runs to 172 residues: Auxin-responsive protein IAA30 (172 aa).

Positions 1–18 (MGRGRSSSSSSIESSCKS) are enriched in low complexity. Residues 1-28 (MGRGRSSSSSSIESSCKSNPFGVSSSNT) form a disordered region. The EAR-like (transcriptional repression) motif lies at 35-39 (LRLGL). Residues 82–171 (SFYVKVNMEG…RRLKISRAYH (90 aa)) form the PB1 domain.

Belongs to the Aux/IAA family. In terms of assembly, homodimers and heterodimers.

Its subcellular location is the nucleus. Functionally, aux/IAA proteins are short-lived transcriptional factors that function as repressors of early auxin response genes at low auxin concentrations. Repression is thought to result from the interaction with auxin response factors (ARFs), proteins that bind to the auxin-responsive promoter element (AuxRE). Formation of heterodimers with ARF proteins may alter their ability to modulate early auxin response genes expression. This Arabidopsis thaliana (Mouse-ear cress) protein is Auxin-responsive protein IAA30 (IAA30).